Here is a 264-residue protein sequence, read N- to C-terminus: MNNFASNDPLVIAGIVYSSRLLTGTGKFKDLDETRLATEAAGSQIVTVAIRRVNIGQDPHQPNLLNVLSPDRYTILPNTAGCYTAEDAVRTCRLARELLDGHRLTKLEVLGDKKTLYPDVVQTLKAAEQLVAEDFQVMVYTSDDPILAKRLEEIGCVAVMPLAAPIGSGLGVQNRYNLLEIIENAQVPIIVDAGVGTASDAAIAMELGCDAVLMNTAIAGARDPVLMASAMRKAVEAGREAFLAGRIPRKRYAAASSPVEGLVG.

Residue lysine 106 is the Schiff-base intermediate with DXP of the active site. 1-deoxy-D-xylulose 5-phosphate-binding positions include glycine 167, alanine 193–glycine 194, and asparagine 215–threonine 216.

Belongs to the ThiG family. In terms of assembly, homotetramer. Forms heterodimers with either ThiH or ThiS.

Its subcellular location is the cytoplasm. The enzyme catalyses [ThiS sulfur-carrier protein]-C-terminal-Gly-aminoethanethioate + 2-iminoacetate + 1-deoxy-D-xylulose 5-phosphate = [ThiS sulfur-carrier protein]-C-terminal Gly-Gly + 2-[(2R,5Z)-2-carboxy-4-methylthiazol-5(2H)-ylidene]ethyl phosphate + 2 H2O + H(+). It participates in cofactor biosynthesis; thiamine diphosphate biosynthesis. In terms of biological role, catalyzes the rearrangement of 1-deoxy-D-xylulose 5-phosphate (DXP) to produce the thiazole phosphate moiety of thiamine. Sulfur is provided by the thiocarboxylate moiety of the carrier protein ThiS. In vitro, sulfur can be provided by H(2)S. In Xylella fastidiosa (strain 9a5c), this protein is Thiazole synthase.